The chain runs to 162 residues: Shikimate kinase (162 aa).

10–15 (GAGKST) lines the ATP pocket. S14 is a Mg(2+) binding site. 3 residues coordinate substrate: D28, R52, and G73. R113 is a binding site for ATP. R129 contacts substrate.

This sequence belongs to the shikimate kinase family. In terms of assembly, monomer. The cofactor is Mg(2+).

The protein resides in the cytoplasm. The catalysed reaction is shikimate + ATP = 3-phosphoshikimate + ADP + H(+). It functions in the pathway metabolic intermediate biosynthesis; chorismate biosynthesis; chorismate from D-erythrose 4-phosphate and phosphoenolpyruvate: step 5/7. Functionally, catalyzes the specific phosphorylation of the 3-hydroxyl group of shikimic acid using ATP as a cosubstrate. In Lactococcus lactis subsp. lactis (strain IL1403) (Streptococcus lactis), this protein is Shikimate kinase.